The sequence spans 30 residues: V-type proton ATPase catalytic subunit A isoform 1 (30 aa).

Belongs to the ATPase alpha/beta chains family. As to quaternary structure, V-ATPase is a heteromultimeric enzyme composed of a peripheral catalytic V1 complex (main components: subunits A, B, C, D, E, and F) attached to an integral membrane V0 proton pore complex (main component: the proteolipid protein).

The catalysed reaction is ATP + H2O + 4 H(+)(in) = ADP + phosphate + 5 H(+)(out). In terms of biological role, catalytic subunit of the peripheral V1 complex of vacuolar ATPase. V-ATPase vacuolar ATPase is responsible for acidifying a variety of intracellular compartments in eukaryotic cells. The chain is V-type proton ATPase catalytic subunit A isoform 1 from Equisetum arvense (Field horsetail).